A 110-amino-acid chain; its full sequence is MKNIFMAVIEFYQRFISPVLPNSCRYYPSCSEYSLHEFKFNSFFGAFFATVLRILRCNPLFRGGIDYPLVRLKIQHQKAIFKICRSEVKFWFVPCKSGKFYVIKSFKKEK.

It belongs to the UPF0161 family.

Its subcellular location is the cell inner membrane. In terms of biological role, could be involved in insertion of integral membrane proteins into the membrane. This chain is Putative membrane protein insertion efficiency factor, found in Campylobacter hominis (strain ATCC BAA-381 / DSM 21671 / CCUG 45161 / LMG 19568 / NCTC 13146 / CH001A).